Reading from the N-terminus, the 157-residue chain is MPSVESFELDHTIVKAPYVRHCGVHNVGSDGIVNKFDIRFCQPNKQAMKPDVIHTLEHLLAFNLRKYIDRYPHFDIIDISPMGCQTGYYLVVSGTPTVREIIDLLELTLKDAVQITEIPAANETQCGQAKLHDLEGAKRLMNFWLSQDKDELEKVFE.

Residues His-54, His-58, and Cys-126 each contribute to the Fe cation site.

It belongs to the LuxS family. As to quaternary structure, homodimer. It depends on Fe cation as a cofactor.

It carries out the reaction S-(5-deoxy-D-ribos-5-yl)-L-homocysteine = (S)-4,5-dihydroxypentane-2,3-dione + L-homocysteine. Functionally, involved in the synthesis of autoinducer 2 (AI-2) which is secreted by bacteria and is used to communicate both the cell density and the metabolic potential of the environment. The regulation of gene expression in response to changes in cell density is called quorum sensing. Catalyzes the transformation of S-ribosylhomocysteine (RHC) to homocysteine (HC) and 4,5-dihydroxy-2,3-pentadione (DPD). In Bacillus cereus (strain 03BB102), this protein is S-ribosylhomocysteine lyase.